We begin with the raw amino-acid sequence, 360 residues long: Proline-rich protein 11 (360 aa).

Disordered stretches follow at residues 20 to 43 (KKKEASHFQSKLITPPPPPPSPER) and 174 to 201 (PPTLPQPASHFPPPPPPPPLPPPPPPLA). A Phosphothreonine modification is found at T33. Phosphoserine is present on S40. Positions 175-201 (PTLPQPASHFPPPPPPPPLPPPPPPLA) are enriched in pro residues. Positions 285–291 (LITPGKS) match the Phosphodegron motif. The residue at position 287 (T287) is a Phosphothreonine. A Phosphoserine modification is found at S291. The D-box motif lies at 296 to 304 (RKLLRKVDV). A KEN box motif is present at residues 316–318 (KEN). The short motif at 325 to 330 (LTPVMT) is the Phosphodegron element. The interval 340 to 360 (AHPRSPTPTLPLSTSSFDEQN) is disordered. A Phosphoserine modification is found at S344. 2 positions are modified to phosphothreonine: T346 and T348. Residues 349-360 (LPLSTSSFDEQN) are compositionally biased toward low complexity.

Ubiquitinated. Rapidly degraded by the proteasome; degradation may involve FBXW7-specific phosphorylated phosphodegron motifs. In terms of tissue distribution, ubiquitously expressed.

The protein resides in the cytoplasm. It localises to the nucleus. In terms of biological role, plays a critical role in cell cycle progression. The polypeptide is Proline-rich protein 11 (PRR11) (Homo sapiens (Human)).